The chain runs to 342 residues: Methionyl-tRNA formyltransferase (342 aa).

108 to 111 (SLLP) contacts (6S)-5,6,7,8-tetrahydrofolate.

This sequence belongs to the Fmt family.

It carries out the reaction L-methionyl-tRNA(fMet) + (6R)-10-formyltetrahydrofolate = N-formyl-L-methionyl-tRNA(fMet) + (6S)-5,6,7,8-tetrahydrofolate + H(+). Functionally, attaches a formyl group to the free amino group of methionyl-tRNA(fMet). The formyl group appears to play a dual role in the initiator identity of N-formylmethionyl-tRNA by promoting its recognition by IF2 and preventing the misappropriation of this tRNA by the elongation apparatus. This chain is Methionyl-tRNA formyltransferase, found in Prochlorococcus marinus (strain MIT 9313).